Here is a 675-residue protein sequence, read N- to C-terminus: 1,4-alpha-glucan branching enzyme TK1436 (675 aa).

The active-site Nucleophile is the glutamate 183. Residues arginine 261 and glycine 278 each coordinate substrate. Residue aspartate 354 is the Proton donor of the active site. Residues tryptophan 407, aspartate 467, and glutamine 476 each coordinate substrate. 2 disordered regions span residues proline 537 to threonine 563 and glutamate 581 to lysine 627. Basic and acidic residues-rich tracts occupy residues proline 549–threonine 563 and glutamate 581–lysine 595. Over residues arginine 596–proline 616 the composition is skewed to basic residues.

The protein belongs to the glycosyl hydrolase 57 family. In terms of assembly, monomer.

The enzyme catalyses Transfers a segment of a (1-&gt;4)-alpha-D-glucan chain to a primary hydroxy group in a similar glucan chain.. Its function is as follows. Catalyzes the formation of branch points in alpha-glucans by cleavage of an alpha-1,4 glycosidic bond and subsequent transfer of the cleaved-off oligosaccharide to a new alpha-1,6 position. The branch chain-length distribution of the reaction products shows degree of polymerization (DP) of 5 to 30, with two local maxima at DP 6 and DP 11. Exhibits an alpha-retaining catalytic mechanism. Does not display alpha-galactosidase or pullulanase activity, since melibiose and pullulan are not substrates. Is not able to catalyze the hydrolysis or transglycosylation of maltoheptaose, suggesting that the TK1436 protein contains neither alpha-amylase nor 4-alpha-glucanotransferase activity. This is 1,4-alpha-glucan branching enzyme TK1436 from Thermococcus kodakarensis (strain ATCC BAA-918 / JCM 12380 / KOD1) (Pyrococcus kodakaraensis (strain KOD1)).